The chain runs to 111 residues: Resistin-like beta (111 aa).

The N-terminal stretch at 1–23 (MGPSSCLLLILIPLLQLINPGST) is a signal peptide. 5 disulfide bridges follow: Cys-55-Cys-108, Cys-67-Cys-107, Cys-76-Cys-93, Cys-78-Cys-95, and Cys-82-Cys-97.

It belongs to the resistin/FIZZ family. Homodimer; disulfide-linked. As to expression, expressed only in the gastrointestinal tract, particularly the colon.

It localises to the secreted. In terms of biological role, probable hormone. This is Resistin-like beta (RETNLB) from Homo sapiens (Human).